A 140-amino-acid polypeptide reads, in one-letter code: uncharacterized protein (140 aa).

Residues lysine 80–leucine 115 are disordered.

This is an uncharacterized protein from Homo sapiens (Human).